Here is a 318-residue protein sequence, read N- to C-terminus: NAC domain-containing protein 59 (318 aa).

Residues Leu-24–Thr-174 enclose the NAC domain. A DNA-binding region spans residues Val-121–Lys-180.

Mostly expressed in root cortex, phloem, atrichoblast and quiescent center (QC), and, to a lower extent, in root endodermis, xylem, pericycle, columella and lateral root cap (LRC). Expressed in roots, cotyledons, very young leaves, senescing leaves, mature flowers and pollen.

The protein localises to the nucleus. Transcription activator that binds to DNA in promoters of target genes on a specific bipartite motif 5'-[AG]CGT[AG](4-5n)[AG][CT]ACGCAA-3'. Triggers the expression of senescence-associated genes during age-, salt- and dark-induced senescence through a regulatory network that may involve cross-talk with salt- and H(2)O(2)-dependent signaling pathways. In Arabidopsis thaliana (Mouse-ear cress), this protein is NAC domain-containing protein 59.